The following is a 454-amino-acid chain: Bifunctional protein GlmU (454 aa).

Residues 1 to 228 (MNKCAIILAA…FEETLGVNSR (228 aa)) form a pyrophosphorylase region. UDP-N-acetyl-alpha-D-glucosamine-binding positions include 8–11 (LAAG), Lys-22, Gln-73, and 78–79 (GT). Asp-103 serves as a coordination point for Mg(2+). The UDP-N-acetyl-alpha-D-glucosamine site is built by Gly-140, Glu-154, Asn-169, and Asn-226. Asn-226 contributes to the Mg(2+) binding site. Residues 229-249 (AELAKVESIMRNRINRTHLDN) are linker. The segment at 250–454 (GVTIIDPLNT…EGWVERKKLK (205 aa)) is N-acetyltransferase. The UDP-N-acetyl-alpha-D-glucosamine site is built by Arg-331 and Lys-349. His-361 serves as the catalytic Proton acceptor. The UDP-N-acetyl-alpha-D-glucosamine site is built by Tyr-364 and Asn-375. Acetyl-CoA-binding positions include 384–385 (NY), Ala-421, and Arg-438.

The protein in the N-terminal section; belongs to the N-acetylglucosamine-1-phosphate uridyltransferase family. This sequence in the C-terminal section; belongs to the transferase hexapeptide repeat family. As to quaternary structure, homotrimer. Mg(2+) is required as a cofactor.

It localises to the cytoplasm. The enzyme catalyses alpha-D-glucosamine 1-phosphate + acetyl-CoA = N-acetyl-alpha-D-glucosamine 1-phosphate + CoA + H(+). The catalysed reaction is N-acetyl-alpha-D-glucosamine 1-phosphate + UTP + H(+) = UDP-N-acetyl-alpha-D-glucosamine + diphosphate. It participates in nucleotide-sugar biosynthesis; UDP-N-acetyl-alpha-D-glucosamine biosynthesis; N-acetyl-alpha-D-glucosamine 1-phosphate from alpha-D-glucosamine 6-phosphate (route II): step 2/2. It functions in the pathway nucleotide-sugar biosynthesis; UDP-N-acetyl-alpha-D-glucosamine biosynthesis; UDP-N-acetyl-alpha-D-glucosamine from N-acetyl-alpha-D-glucosamine 1-phosphate: step 1/1. Its pathway is bacterial outer membrane biogenesis; LPS lipid A biosynthesis. Functionally, catalyzes the last two sequential reactions in the de novo biosynthetic pathway for UDP-N-acetylglucosamine (UDP-GlcNAc). The C-terminal domain catalyzes the transfer of acetyl group from acetyl coenzyme A to glucosamine-1-phosphate (GlcN-1-P) to produce N-acetylglucosamine-1-phosphate (GlcNAc-1-P), which is converted into UDP-GlcNAc by the transfer of uridine 5-monophosphate (from uridine 5-triphosphate), a reaction catalyzed by the N-terminal domain. The polypeptide is Bifunctional protein GlmU (Clostridium perfringens (strain ATCC 13124 / DSM 756 / JCM 1290 / NCIMB 6125 / NCTC 8237 / Type A)).